The following is a 212-amino-acid chain: ER lumen protein-retaining receptor 1-B (212 aa).

Residues 1–4 lie on the Lumenal side of the membrane; that stretch reads MNIF. The chain crosses the membrane as a helical span at residues 5–24; the sequence is RFLGDISHLSAIIILLLKIW. The Cytoplasmic segment spans residues 25-32; sequence KSRSCAGI. The helical transmembrane segment at 33–52 threads the bilayer; it reads SGKSQLLFAIVFTTRYLDLF. Residues 47-48 are interaction with the K-D-E-L motif on target proteins; that stretch reads RY. Residues 53–58 are Lumenal-facing; it reads TNFISF. A helical membrane pass occupies residues 59–79; it reads YNTSMKVVYVASSYATVWMIY. Residues 80–92 are Cytoplasmic-facing; that stretch reads SKFKATYDGNHDT. The helical transmembrane segment at 93–110 threads the bilayer; the sequence is FRVEFLIVPTAILSFLVN. At 111-116 the chain is on the lumenal side; that stretch reads HDFTPL. A helical transmembrane segment spans residues 117-135; sequence EILWTFSIYLESVAILPQL. Residues 136–149 lie on the Cytoplasmic side of the membrane; that stretch reads FMVSKTGEAETITS. Residues 150–168 traverse the membrane as a helical segment; sequence HYLFALGIYRTLYLFNWIW. Residues 159–169 form an interaction with the K-D-E-L motif on target proteins region; the sequence is RTLYLFNWIWR. Residues 169 to 178 are Lumenal-facing; it reads RYQFEEFFDL. Residues 179-199 form a helical membrane-spanning segment; that stretch reads IAIVAGLVQTVLYCDFFYLYI. Residues 200–212 lie on the Cytoplasmic side of the membrane; that stretch reads TKVLKGKKLSLPA. An important for recycling of cargo proteins with the sequence motif K-D-E-L from the Golgi to the endoplasmic reticulum region spans residues 204-207; that stretch reads KGKK.

The protein belongs to the ERD2 family.

It localises to the golgi apparatus membrane. The protein resides in the cytoplasmic vesicle. It is found in the COPI-coated vesicle membrane. The protein localises to the endoplasmic reticulum membrane. Its subcellular location is the endoplasmic reticulum-Golgi intermediate compartment membrane. Receptor for the C-terminal sequence motif K-D-E-L that is present on endoplasmic reticulum resident proteins and that mediates their recycling from the Golgi back to the endoplasmic reticulum. The sequence is that of ER lumen protein-retaining receptor 1-B (kdelr1-b) from Xenopus laevis (African clawed frog).